The primary structure comprises 23 residues: U1-ctenitoxin-Co1a (23 aa).

Residues cysteine 10 and cysteine 20 are joined by a disulfide bond.

As to expression, expressed by the venom gland.

It is found in the secreted. Functionally, insecticidal neurotoxin that reversibly inhibits the N-methyl-D-aspartate (NMDA)-subtype of ionotropic glutamate receptor (GRIN) and inhibits inactivation of insect sodium channels (Nav). In vivo, is highly toxic to insects. In Ctenus ornatus (Brazilian spider), this protein is U1-ctenitoxin-Co1a.